The sequence spans 171 residues: Shikimate kinase (171 aa).

Gly-14–Thr-19 serves as a coordination point for ATP. Ser-18 is a binding site for Mg(2+). Residues Asp-36, Arg-60, and Gly-82 each contribute to the substrate site. Residue Arg-120 coordinates ATP. Arg-139 contributes to the substrate binding site. Gln-156 contributes to the ATP binding site.

Belongs to the shikimate kinase family. As to quaternary structure, monomer. It depends on Mg(2+) as a cofactor.

It localises to the cytoplasm. It carries out the reaction shikimate + ATP = 3-phosphoshikimate + ADP + H(+). It participates in metabolic intermediate biosynthesis; chorismate biosynthesis; chorismate from D-erythrose 4-phosphate and phosphoenolpyruvate: step 5/7. Functionally, catalyzes the specific phosphorylation of the 3-hydroxyl group of shikimic acid using ATP as a cosubstrate. This is Shikimate kinase from Shewanella sp. (strain ANA-3).